We begin with the raw amino-acid sequence, 472 residues long: Uronate isomerase (472 aa).

Belongs to the metallo-dependent hydrolases superfamily. Uronate isomerase family.

It catalyses the reaction D-glucuronate = D-fructuronate. The enzyme catalyses aldehydo-D-galacturonate = keto-D-tagaturonate. It functions in the pathway carbohydrate metabolism; pentose and glucuronate interconversion. This is Uronate isomerase from Halalkalibacterium halodurans (strain ATCC BAA-125 / DSM 18197 / FERM 7344 / JCM 9153 / C-125) (Bacillus halodurans).